The chain runs to 297 residues: Homeobox protein HMX3 (297 aa).

Disordered stretches follow at residues 24-43 (NSDS…KAGL) and 96-172 (AAQK…RKKK). Composition is skewed to basic and acidic residues over residues 109–123 (TDRD…SDPD) and 145–166 (EDGK…ADKK). The segment at residues 170-229 (KKKTRTVFSRSQVFQLESTFDMKRYLSSSERAGLAASLHLTETQVKIWFQNRRNKWKRQL) is a DNA-binding region (homeobox).

This sequence belongs to the HMX homeobox family. Expressed in the ear placode and vesicle and in cells forming the vestibulo-acoustic ganglion. Also expressed in the lateral line.

It is found in the nucleus. Transcription factor involved in specification of neuronal cell types and which is required for inner ear and hypothalamus development. Binds to the 5'-CAAGTG-3' core sequence. The sequence is that of Homeobox protein HMX3 (hmx3) from Danio rerio (Zebrafish).